A 239-amino-acid chain; its full sequence is tRNA (guanine-N(7)-)-methyltransferase (239 aa).

4 residues coordinate S-adenosyl-L-methionine: Glu-69, Glu-94, Asp-121, and Asp-144. The active site involves Asp-144. Lys-148 is a binding site for substrate. An interaction with RNA region spans residues Arg-150–Arg-155. Substrate-binding positions include Asp-180 and Thr-217 to Glu-220.

Belongs to the class I-like SAM-binding methyltransferase superfamily. TrmB family. In terms of assembly, monomer.

The catalysed reaction is guanosine(46) in tRNA + S-adenosyl-L-methionine = N(7)-methylguanosine(46) in tRNA + S-adenosyl-L-homocysteine. The protein operates within tRNA modification; N(7)-methylguanine-tRNA biosynthesis. Catalyzes the formation of N(7)-methylguanine at position 46 (m7G46) in tRNA. The protein is tRNA (guanine-N(7)-)-methyltransferase of Yersinia enterocolitica serotype O:8 / biotype 1B (strain NCTC 13174 / 8081).